A 324-amino-acid polypeptide reads, in one-letter code: Cytosolic sulfotransferase 13 (324 aa).

76-81 is a 3'-phosphoadenylyl sulfate binding site; it reads KSGTTW. The active-site Proton acceptor is histidine 134. 3'-phosphoadenylyl sulfate-binding positions include arginine 156, serine 164, tyrosine 222, and 288 to 290; that span reads RKG.

It belongs to the sulfotransferase 1 family.

It is found in the cytoplasm. In terms of biological role, sulfotransferase that utilizes 3'-phospho-5'-adenylyl sulfate (PAPS) as sulfonate donor. This chain is Cytosolic sulfotransferase 13 (SOT13), found in Arabidopsis thaliana (Mouse-ear cress).